Reading from the N-terminus, the 842-residue chain is Glucans biosynthesis glucosyltransferase H (842 aa).

The next 7 helical transmembrane spans lie at I140–L160, I194–M214, V513–L533, L570–W590, V615–G635, F656–L676, and F680–V700.

Belongs to the glycosyltransferase 2 family. OpgH subfamily.

Its subcellular location is the cell inner membrane. It participates in glycan metabolism; osmoregulated periplasmic glucan (OPG) biosynthesis. Functionally, involved in the biosynthesis of osmoregulated periplasmic glucans (OPGs). The protein is Glucans biosynthesis glucosyltransferase H of Citrobacter koseri (strain ATCC BAA-895 / CDC 4225-83 / SGSC4696).